A 378-amino-acid chain; its full sequence is Cytochrome b (378 aa).

The next 4 helical transmembrane spans lie at 32–52 (FGSL…FLAM), 76–97 (WLIR…FLHV), 112–132 (WNIG…GYVL), and 177–197 (FFAF…VHLL). Residues His-82 and His-96 each contribute to the heme b site. The heme b site is built by His-181 and His-195. His-200 is an a ubiquinone binding site. 4 consecutive transmembrane segments (helical) span residues 225–245 (IKDA…VLFF), 287–307 (LGGV…PILH), 319–339 (LSQC…WIGG), and 346–366 (FITI…FALP).

The protein belongs to the cytochrome b family. As to quaternary structure, the cytochrome bc1 complex contains 11 subunits: 3 respiratory subunits (MT-CYB, CYC1 and UQCRFS1), 2 core proteins (UQCRC1 and UQCRC2) and 6 low-molecular weight proteins (UQCRH/QCR6, UQCRB/QCR7, UQCRQ/QCR8, UQCR10/QCR9, UQCR11/QCR10 and a cleavage product of UQCRFS1). This cytochrome bc1 complex then forms a dimer. Heme b serves as cofactor.

The protein resides in the mitochondrion inner membrane. Its function is as follows. Component of the ubiquinol-cytochrome c reductase complex (complex III or cytochrome b-c1 complex) that is part of the mitochondrial respiratory chain. The b-c1 complex mediates electron transfer from ubiquinol to cytochrome c. Contributes to the generation of a proton gradient across the mitochondrial membrane that is then used for ATP synthesis. This chain is Cytochrome b (MT-CYB), found in Sciurus aberti (Abert's squirrel).